Consider the following 562-residue polypeptide: Long-chain-fatty-acid--CoA ligase (562 aa).

213–224 contacts ATP; that stretch reads YTGGTTGVAKGA.

The protein belongs to the ATP-dependent AMP-binding enzyme family. The cofactor is Mg(2+).

It is found in the membrane. The enzyme catalyses a long-chain fatty acid + ATP + CoA = a long-chain fatty acyl-CoA + AMP + diphosphate. The protein operates within lipid metabolism; fatty acid beta-oxidation. Functionally, catalyzes the esterification, concomitant with transport, of exogenous long-chain fatty acids into metabolically active CoA thioesters for subsequent degradation or incorporation into phospholipids. The sequence is that of Long-chain-fatty-acid--CoA ligase (fadD) from Yersinia pestis.